We begin with the raw amino-acid sequence, 160 residues long: Ribosomal RNA large subunit methyltransferase H (160 aa).

S-adenosyl-L-methionine contacts are provided by Leu-77 and Gly-109.

It belongs to the RNA methyltransferase RlmH family. Homodimer.

The protein resides in the cytoplasm. The catalysed reaction is pseudouridine(1915) in 23S rRNA + S-adenosyl-L-methionine = N(3)-methylpseudouridine(1915) in 23S rRNA + S-adenosyl-L-homocysteine + H(+). Its function is as follows. Specifically methylates the pseudouridine at position 1915 (m3Psi1915) in 23S rRNA. This is Ribosomal RNA large subunit methyltransferase H from Moorella thermoacetica (strain ATCC 39073 / JCM 9320).